The chain runs to 255 residues: Coniferyl-alcohol dehydrogenase (255 aa).

Residues 12-17 (GVSSGI), Asp36, 51-52 (DL), and Gly77 contribute to the NAD(+) site. Ser117 contacts substrate. NAD(+)-binding residues include Tyr157 and Lys161. The active-site Proton acceptor is the Tyr157.

It belongs to the short-chain dehydrogenases/reductases (SDR) family.

It carries out the reaction (E)-coniferol + NADP(+) = (E)-coniferaldehyde + NADPH + H(+). In terms of biological role, catalyzes the conversion of coniferyl alcohol into coniferyl aldehyde in the eugenol degradation pathway. Specific for coniferyl alcohol; does not act on cinnamyl alcohol, 4-coumaryl alcohol or sinapyl alcohol. In Pseudomonas sp. (strain HR199 / DSM 7063), this protein is Coniferyl-alcohol dehydrogenase (calA).